The primary structure comprises 356 residues: Butyrate kinase 2 (356 aa).

The protein belongs to the acetokinase family. In terms of assembly, homodimer.

Its subcellular location is the cytoplasm. The catalysed reaction is butanoate + ATP = butanoyl phosphate + ADP. It functions in the pathway lipid metabolism; butanoate metabolism. Catalyzes the conversion of butyryl-CoA through butyryl phosphate to butyrate. This chain is Butyrate kinase 2 (buk2), found in Clostridium acetobutylicum (strain ATCC 824 / DSM 792 / JCM 1419 / IAM 19013 / LMG 5710 / NBRC 13948 / NRRL B-527 / VKM B-1787 / 2291 / W).